The primary structure comprises 322 residues: Glutamyl-Q tRNA(Asp) synthetase (322 aa).

L-glutamate contacts are provided by residues 28–32 and Glu-64; that span reads RFAPS. A 'HIGH' region motif is present at residues 31–41; it reads PSPSGDLHFGS. Residues Cys-120, Cys-122, Tyr-134, and Cys-138 each contribute to the Zn(2+) site. The L-glutamate site is built by Tyr-191 and Arg-209. Positions 247–251 match the 'KMSKS' region motif; that stretch reads KLSKQ. Lys-250 is an ATP binding site.

This sequence belongs to the class-I aminoacyl-tRNA synthetase family. GluQ subfamily. It depends on Zn(2+) as a cofactor.

Functionally, catalyzes the tRNA-independent activation of glutamate in presence of ATP and the subsequent transfer of glutamate onto a tRNA(Asp). Glutamate is transferred on the 2-amino-5-(4,5-dihydroxy-2-cyclopenten-1-yl) moiety of the queuosine in the wobble position of the QUC anticodon. This is Glutamyl-Q tRNA(Asp) synthetase from Pectobacterium atrosepticum (strain SCRI 1043 / ATCC BAA-672) (Erwinia carotovora subsp. atroseptica).